The sequence spans 466 residues: Vacuolar protein sorting-associated protein 30 (466 aa).

The segment at 35–55 (SETNTDNSDNNKHNGENDRNI) is disordered. A compositionally biased stretch (basic and acidic residues) spans 43–53 (DNNKHNGENDR). A coiled-coil region spans residues 149-258 (DTLLEKLKEE…QMEHLSFIKD (110 aa)). The segment at 279 to 463 (LNIYNETFRI…LAFSTSRINK (185 aa)) is BARA. The tract at residues 439 to 464 (WTTACKFLLTNIKWLLAFSTSRINKA) is required for membrane-association, autophagic function during starvation and normal autophagosome morphology.

Belongs to the beclin family. Component of the autophagy-specific VPS34 PI3-kinase complex I; and of the VPS34 PI3-kinase complex II.

It localises to the endosome membrane. Its subcellular location is the vacuole membrane. The protein resides in the preautophagosomal structure membrane. Required for cytoplasm to vacuole transport (Cvt), autophagy, nucleophagy, and mitophagy, as a part of the autophagy-specific VPS34 PI3-kinase complex I. This complex is essential to recruit the ATG8-phosphatidylinositol conjugate and the ATG12-ATG5 conjugate to the pre-autophagosomal structure. Also involved in endosome-to-Golgi retrograde transport as part of the VPS34 PI3-kinase complex II. The protein is Vacuolar protein sorting-associated protein 30 of Kluyveromyces marxianus (strain DMKU3-1042 / BCC 29191 / NBRC 104275) (Yeast).